The following is a 418-amino-acid chain: Beta-arrestin-1 (418 aa).

The tract at residues 1-163 (MGDKGTRVFK…LEEKIHKRNS (163 aa)) is interaction with SRC. The interval 45 to 86 (PEYLKERRVYVTLTCAFRYGREDLDVLGLTFRKDLFVANVQS) is interaction with CHRM2. Y47 carries the post-translational modification Phosphotyrosine. 1D-myo-inositol hexakisphosphate-binding residues include K250, M255, K324, and K326. Residues 318–418 (IVSYKVKVKL…GTGSPHLNNR (101 aa)) form an interaction with TRAF6 region. 2 disordered regions span residues 353-374 (HPKP…PVDT) and 397-418 (KGMK…LNNR). Residues 355–366 (KPKEEPPHREVP) show a composition bias toward basic and acidic residues. S412 carries the phosphoserine modification. S412 bears the Phosphoserine; by GRK5 mark.

This sequence belongs to the arrestin family. Monomer. Homodimer. Homooligomer; the self-association is mediated by InsP6-binding. Heterooligomer with ARRB2; the association is mediated by InsP6-binding. Interacts with ADRB2 (phosphorylated). Interacts with CHRM2 (phosphorylated). Interacts with LHCGR. Interacts with CYTH2 and CASR. Interacts with AP2B1 (dephosphorylated at 'Tyr-737'); phosphorylation of AP2B1 at 'Tyr-737' disrupts the interaction. Interacts (dephosphorylated at Ser-412) with CLTC. Interacts with CCR2 and GRK2. Interacts with CRR5. Interacts with PTAFR (phosphorylated on serine residues). Interacts with CLTC and MAP2K3. Interacts with CREB1. Interacts with TRAF6. Interacts with IGF1R and MDM2. Interacts with C5AR1. Interacts with PDE4D. Interacts with SRC (via the SH3 domain and the protein kinase domain); the interaction is independent of the phosphorylation state of SRC C-terminus. Interacts with TACR1. Interacts with RAF1. Interacts with CHUK, IKBKB and MAP3K14. Interacts with DVL1; the interaction is enhanced by phosphorylation of DVL1. Interacts with DVL2; the interaction is enhanced by phosphorylation of DVL2. Interacts with IGF1R. Associates with MAP kinase p38. Part of a MAPK signaling complex consisting of TACR1, ARRB1, SRC, MAPK1 (activated) and MAPK3 (activated). Part of a MAPK signaling complex consisting of F2RL1, ARRB1, RAF1, MAPK1 (activated) and MAPK3 (activated). Interacts with GPR143. Interacts with MAP2K4/MKK4. Interacts with HCK and CXCR1 (phosphorylated). Interacts with ACKR3 and ACKR4. Interacts with ARRDC1; the interaction is direct. Interacts with GPR61, GPR62 and GPR135. Post-translationally, constitutively phosphorylated at Ser-412 in the cytoplasm. At the plasma membrane, is rapidly dephosphorylated, a process that is required for clathrin binding and beta-2 adrenergic receptor/ADRB2 endocytosis but not for ADRB2 binding and desensitization. Once internalized, is rephosphorylated. In terms of processing, the ubiquitination status appears to regulate the formation and trafficking of beta-arrestin-GPCR complexes and signaling. Ubiquitination appears to occur GPCR-specific. Ubiquitinated by MDM2; the ubiquitination is required for rapid internalization of ADRB2. Deubiquitinated by USP33; the deubiquitination leads to a dissociation of the beta-arrestin-GPCR complex. Stimulation of a class A GPCR, such as ADRB2, induces transient ubiquitination and subsequently promotes association with USP33. As to expression, predominantly localized in neuronal tissues and in the spleen.

Its subcellular location is the cytoplasm. It is found in the nucleus. The protein localises to the cell membrane. It localises to the membrane. The protein resides in the clathrin-coated pit. Its subcellular location is the cell projection. It is found in the pseudopodium. The protein localises to the cytoplasmic vesicle. Its function is as follows. Functions in regulating agonist-mediated G-protein coupled receptor (GPCR) signaling by mediating both receptor desensitization and resensitization processes. During homologous desensitization, beta-arrestins bind to the GPRK-phosphorylated receptor and sterically preclude its coupling to the cognate G-protein; the binding appears to require additional receptor determinants exposed only in the active receptor conformation. The beta-arrestins target many receptors for internalization by acting as endocytic adapters (CLASPs, clathrin-associated sorting proteins) and recruiting the GPRCs to the adapter protein 2 complex 2 (AP-2) in clathrin-coated pits (CCPs). However, the extent of beta-arrestin involvement appears to vary significantly depending on the receptor, agonist and cell type. Internalized arrestin-receptor complexes traffic to intracellular endosomes, where they remain uncoupled from G-proteins. Two different modes of arrestin-mediated internalization occur. Class A receptors, like ADRB2, OPRM1, ENDRA, D1AR and ADRA1B dissociate from beta-arrestin at or near the plasma membrane and undergo rapid recycling. Class B receptors, like AVPR2, AGTR1, NTSR1, TRHR and TACR1 internalize as a complex with arrestin and traffic with it to endosomal vesicles, presumably as desensitized receptors, for extended periods of time. Receptor resensitization then requires that receptor-bound arrestin is removed so that the receptor can be dephosphorylated and returned to the plasma membrane. Involved in internalization of P2RY4 and UTP-stimulated internalization of P2RY2. Involved in phosphorylation-dependent internalization of OPRD1 ands subsequent recycling. Involved in the degradation of cAMP by recruiting cAMP phosphodiesterases to ligand-activated receptors. Beta-arrestins function as multivalent adapter proteins that can switch the GPCR from a G-protein signaling mode that transmits short-lived signals from the plasma membrane via small molecule second messengers and ion channels to a beta-arrestin signaling mode that transmits a distinct set of signals that are initiated as the receptor internalizes and transits the intracellular compartment. Acts as a signaling scaffold for MAPK pathways such as MAPK1/3 (ERK1/2). ERK1/2 activated by the beta-arrestin scaffold is largely excluded from the nucleus and confined to cytoplasmic locations such as endocytic vesicles, also called beta-arrestin signalosomes. Recruits c-Src/SRC to ADRB2 resulting in ERK activation. GPCRs for which the beta-arrestin-mediated signaling relies on both ARRB1 and ARRB2 (codependent regulation) include ADRB2, F2RL1 and PTH1R. For some GPCRs the beta-arrestin-mediated signaling relies on either ARRB1 or ARRB2 and is inhibited by the other respective beta-arrestin form (reciprocal regulation). Inhibits ERK1/2 signaling in AGTR1- and AVPR2-mediated activation (reciprocal regulation). Is required for SP-stimulated endocytosis of NK1R and recruits c-Src/SRC to internalized NK1R resulting in ERK1/2 activation, which is required for the antiapoptotic effects of SP. Is involved in proteinase-activated F2RL1-mediated ERK activity. Acts as a signaling scaffold for the AKT1 pathway. Is involved in alpha-thrombin-stimulated AKT1 signaling. Is involved in IGF1-stimulated AKT1 signaling leading to increased protection from apoptosis. Involved in activation of the p38 MAPK signaling pathway and in actin bundle formation. Involved in F2RL1-mediated cytoskeletal rearrangement and chemotaxis. Involved in AGTR1-mediated stress fiber formation by acting together with GNAQ to activate RHOA. Appears to function as signaling scaffold involved in regulation of MIP-1-beta-stimulated CCR5-dependent chemotaxis. Involved in attenuation of NF-kappa-B-dependent transcription in response to GPCR or cytokine stimulation by interacting with and stabilizing CHUK. May serve as nuclear messenger for GPCRs. Involved in OPRD1-stimulated transcriptional regulation by translocating to CDKN1B and FOS promoter regions and recruiting EP300 resulting in acetylation of histone H4. Involved in regulation of LEF1 transcriptional activity via interaction with DVL1 and/or DVL2 Also involved in regulation of receptors other than GPCRs. Involved in Toll-like receptor and IL-1 receptor signaling through the interaction with TRAF6 which prevents TRAF6 autoubiquitination and oligomerization required for activation of NF-kappa-B and JUN. Binds phosphoinositides. Binds inositolhexakisphosphate (InsP6). Involved in IL8-mediated granule release in neutrophils. Required for atypical chemokine receptor ACKR2-induced RAC1-LIMK1-PAK1-dependent phosphorylation of cofilin (CFL1) and for the up-regulation of ACKR2 from endosomal compartment to cell membrane, increasing its efficiency in chemokine uptake and degradation. Involved in the internalization of the atypical chemokine receptor ACKR3. Negatively regulates the NOTCH signaling pathway by mediating the ubiquitination and degradation of NOTCH1 by ITCH. Participates in the recruitment of the ubiquitin-protein ligase to the receptor. This chain is Beta-arrestin-1, found in Rattus norvegicus (Rat).